A 289-amino-acid polypeptide reads, in one-letter code: Pantoate kinase (289 aa).

It belongs to the GHMP kinase family. PoK subfamily.

It catalyses the reaction (R)-pantoate + ATP = (R)-4-phosphopantoate + ADP + H(+). Its pathway is cofactor biosynthesis; coenzyme A biosynthesis. Functionally, phosphorylates (R)-pantoate to form (R)-4-phosphopantoate in the CoA biosynthesis pathway. ATP is the best phosphate donor. Can be replaced with UTP, with lower efficiency. The protein is Pantoate kinase of Methanospirillum hungatei JF-1 (strain ATCC 27890 / DSM 864 / NBRC 100397 / JF-1).